The following is a 5058-amino-acid chain: ATP-binding cassette sub-family A member 13 (5058 aa).

7 helical membrane-spanning segments follow: residues 23–43 (PVLF…LTVL), 3568–3588 (VGFF…ASMV), 3607–3627 (GVHP…VLTI), 3648–3668 (FIVF…SYLL), 3679–3699 (ALCT…LLVL), 3709–3729 (TFLC…ITFL), and 3752–3772 (FGWV…CGWY). Residues 3842-4074 (VTLVSVTKEY…YGQGLRLTLT (233 aa)) enclose the ABC transporter 1 domain. 3875 to 3882 (GTNGAGKT) is an ATP binding site. A run of 7 helical transmembrane segments spans residues 4226-4246 (TLAD…LFMV), 4458-4478 (VALC…SSVV), 4504-4524 (FLYD…VIVA), 4536-4556 (LAAT…WMYL), 4568-4588 (FISY…ITIM), 4607-4627 (VLKW…LVEL), and 4651-4671 (MNFL…LLLL). Residues 4718–4956 (LVLYNLSKHY…FGDGYTVKVW (239 aa)) form the ABC transporter 2 domain. 4754-4761 (GVNGAGKS) serves as a coordination point for ATP.

The protein belongs to the ABC transporter superfamily. In terms of tissue distribution, significantly expressed in the bone marrow, trachea, testis, thyroid and lung as well as in skin fibroblasts.

The protein resides in the cytoplasmic vesicle membrane. The enzyme catalyses cholesterol(in) + ATP + H2O = cholesterol(out) + ADP + phosphate + H(+). May mediate the cholesterol and gangliosides transport from the plasma membrane to intracellular vesicles in an ATP hydrolysis dependent manner, thus playing a role in their internalization by endocytic retrograde transport and may also participate in the endocytosis of synaptic vesicle in cortical neurons. This Homo sapiens (Human) protein is ATP-binding cassette sub-family A member 13.